The chain runs to 274 residues: Ribosomal RNA small subunit methyltransferase A (274 aa).

Residues histidine 15, leucine 17, glycine 42, glutamate 64, aspartate 89, and asparagine 109 each coordinate S-adenosyl-L-methionine.

It belongs to the class I-like SAM-binding methyltransferase superfamily. rRNA adenine N(6)-methyltransferase family. RsmA subfamily.

The protein resides in the cytoplasm. It catalyses the reaction adenosine(1518)/adenosine(1519) in 16S rRNA + 4 S-adenosyl-L-methionine = N(6)-dimethyladenosine(1518)/N(6)-dimethyladenosine(1519) in 16S rRNA + 4 S-adenosyl-L-homocysteine + 4 H(+). Specifically dimethylates two adjacent adenosines (A1518 and A1519) in the loop of a conserved hairpin near the 3'-end of 16S rRNA in the 30S particle. May play a critical role in biogenesis of 30S subunits. The protein is Ribosomal RNA small subunit methyltransferase A of Synechococcus sp. (strain RCC307).